The sequence spans 170 residues: Putative apoptosis inhibitor ORF87 (170 aa).

BIR repeat units lie at residues 22–92 and 104–169; these read RIKS…PVGK and RLKS…KLSS.

May act as an apoptosis inhibitor. This Ostreid herpesvirus 1 (isolate France) (OsHV-1) protein is Putative apoptosis inhibitor ORF87.